The following is a 142-amino-acid chain: Large ribosomal subunit protein uL11 (142 aa).

The protein belongs to the universal ribosomal protein uL11 family. Part of the ribosomal stalk of the 50S ribosomal subunit. Interacts with L10 and the large rRNA to form the base of the stalk. L10 forms an elongated spine to which L12 dimers bind in a sequential fashion forming a multimeric L10(L12)X complex. Post-translationally, one or more lysine residues are methylated.

Forms part of the ribosomal stalk which helps the ribosome interact with GTP-bound translation factors. The sequence is that of Large ribosomal subunit protein uL11 from Vibrio vulnificus (strain CMCP6).